Reading from the N-terminus, the 179-residue chain is Adenine phosphoribosyltransferase (179 aa).

Belongs to the purine/pyrimidine phosphoribosyltransferase family. Homodimer.

It localises to the cytoplasm. It catalyses the reaction AMP + diphosphate = 5-phospho-alpha-D-ribose 1-diphosphate + adenine. The protein operates within purine metabolism; AMP biosynthesis via salvage pathway; AMP from adenine: step 1/1. In terms of biological role, catalyzes a salvage reaction resulting in the formation of AMP, that is energically less costly than de novo synthesis. This Helicobacter pylori (strain HPAG1) protein is Adenine phosphoribosyltransferase.